Here is a 363-residue protein sequence, read N- to C-terminus: UDP-3-O-acylglucosamine N-acyltransferase (363 aa).

Catalysis depends on H266, which acts as the Proton acceptor.

It belongs to the transferase hexapeptide repeat family. LpxD subfamily. Homotrimer.

It carries out the reaction a UDP-3-O-[(3R)-3-hydroxyacyl]-alpha-D-glucosamine + a (3R)-hydroxyacyl-[ACP] = a UDP-2-N,3-O-bis[(3R)-3-hydroxyacyl]-alpha-D-glucosamine + holo-[ACP] + H(+). The protein operates within bacterial outer membrane biogenesis; LPS lipid A biosynthesis. Its function is as follows. Catalyzes the N-acylation of UDP-3-O-acylglucosamine using 3-hydroxyacyl-ACP as the acyl donor. Is involved in the biosynthesis of lipid A, a phosphorylated glycolipid that anchors the lipopolysaccharide to the outer membrane of the cell. The protein is UDP-3-O-acylglucosamine N-acyltransferase of Bordetella parapertussis (strain 12822 / ATCC BAA-587 / NCTC 13253).